Here is a 295-residue protein sequence, read N- to C-terminus: GTPase Era (295 aa).

One can recognise an Era-type G domain in the interval 5–172 (YCGYAAIIGR…EQAVHQLMPE (168 aa)). The tract at residues 13 to 20 (GRPNVGKS) is G1. Position 13 to 20 (13 to 20 (GRPNVGKS)) interacts with GTP. Positions 39–43 (QTTRY) are G2. Positions 60-63 (DTPG) are G3. Residues 60 to 64 (DTPGL) and 121 to 124 (NKVD) contribute to the GTP site. The tract at residues 121–124 (NKVD) is G4. A G5 region spans residues 151 to 153 (LSA). Residues 203–279 (LGQEIPYSLA…FLQLWVKVKS (77 aa)) form the KH type-2 domain.

It belongs to the TRAFAC class TrmE-Era-EngA-EngB-Septin-like GTPase superfamily. Era GTPase family. In terms of assembly, monomer.

Its subcellular location is the cytoplasm. The protein resides in the cell inner membrane. Functionally, an essential GTPase that binds both GDP and GTP, with rapid nucleotide exchange. Plays a role in 16S rRNA processing and 30S ribosomal subunit biogenesis and possibly also in cell cycle regulation and energy metabolism. This Coxiella burnetii (strain CbuK_Q154) (Coxiella burnetii (strain Q154)) protein is GTPase Era.